Here is an 86-residue protein sequence, read N- to C-terminus: Putative membrane protein insertion efficiency factor (86 aa).

Belongs to the UPF0161 family.

The protein resides in the cell inner membrane. Its function is as follows. Could be involved in insertion of integral membrane proteins into the membrane. The chain is Putative membrane protein insertion efficiency factor from Cellvibrio japonicus (strain Ueda107) (Pseudomonas fluorescens subsp. cellulosa).